Consider the following 332-residue polypeptide: MAYAAFRSIGAYVPSKILSNEDLSKMVDTTDEWITKRTGIKERHIAADGEFTSDMGAKAAQIAIERSGIEKNKIDMIVCATISPDYFCMPSTATIISTKLGLENVTAFDISAACTGFVYILSIAKAFIESGMKKNVLIIGAEKLSSITDYTDRGTCILFGDGAGAAIISATDDKSEAIIDIHTGADGEFADLLMSPNGGSGSIHDTLDQEAKSCFMQMKGNETFKVAVKTLTKDVIEILQDNNIESSEIKHFVPHQANLRIIKAVGDALKLNDEQVVLTVEKFGNTSGASIPMAINDIYESGKLKAGELMLLDAFGGGLTWGSALVPFSPLK.

Residues C114 and H255 contribute to the active site. Positions 256–260 (QANLR) are ACP-binding. The active site involves N285.

The protein belongs to the thiolase-like superfamily. FabH family. In terms of assembly, homodimer.

The protein resides in the cytoplasm. It catalyses the reaction malonyl-[ACP] + acetyl-CoA + H(+) = 3-oxobutanoyl-[ACP] + CO2 + CoA. The protein operates within lipid metabolism; fatty acid biosynthesis. Catalyzes the condensation reaction of fatty acid synthesis by the addition to an acyl acceptor of two carbons from malonyl-ACP. Catalyzes the first condensation reaction which initiates fatty acid synthesis and may therefore play a role in governing the total rate of fatty acid production. Possesses both acetoacetyl-ACP synthase and acetyl transacylase activities. Its substrate specificity determines the biosynthesis of branched-chain and/or straight-chain of fatty acids. The sequence is that of Beta-ketoacyl-[acyl-carrier-protein] synthase III from Sulfurimonas denitrificans (strain ATCC 33889 / DSM 1251) (Thiomicrospira denitrificans (strain ATCC 33889 / DSM 1251)).